Here is a 250-residue protein sequence, read N- to C-terminus: Archaeal flagellar motor scaffold protein FlaX (250 aa).

At methionine 1–serine 9 the chain is on the extracellular side. Residues serine 10–phenylalanine 30 traverse the membrane as a helical segment. The Cytoplasmic portion of the chain corresponds to arginine 31–glycine 250. Polar residues predominate over residues threonine 42–proline 61. The segment at threonine 42–aspartate 72 is disordered. A compositionally biased stretch (basic and acidic residues) spans alanine 62–aspartate 72.

In terms of assembly, the S.acidocaldarius archaellum assembly machinery and its filament consist of seven proteins (FlaB, FlaF, FlaG, FlaH, FlaI, FlaJ and FlaX). FlaX assembles into ring-shaped oligomers. Interacts directly with FlaH and the motor ATPase FlaI.

The protein localises to the archaeal flagellum. It localises to the cell membrane. Its activity is regulated as follows. The presence of the flagellar core components FlaH, FlaI and FlaJ seems to be crucial for the stability of FlaX. Functionally, component of the archaellum. FlaX, FlaH and FlaI form the core cytoplasmic motor complex of the crenarchaeal archaellum. FlaX forms a ring that may act as a membrane-bound cytoplasmic scaffold that guides the assembly of the archaellum motor complex. Is essential for archaellum assembly. The protein is Archaeal flagellar motor scaffold protein FlaX of Sulfolobus acidocaldarius (strain ATCC 33909 / DSM 639 / JCM 8929 / NBRC 15157 / NCIMB 11770).